The chain runs to 226 residues: Survival motor neuron protein (226 aa).

Basic and acidic residues predominate over residues 35–44 (ADSTNKREEE). The interval 35–68 (ADSTNKREEENAAAAEEEAGEISATGGATSPEPV) is disordered. The Tudor domain maps to 69–128 (SFKVGDYARATYVDGVDYEGAVVSINEEKGTCVLRYLGYENEQEVLLVDLLPSWGKRVRR). The disordered stretch occupies residues 137–172 (DEDEQLSRPKASAGSHSKTPKSSRRSRISGGLVMPP). Over residues 154 to 163 (KTPKSSRRSR) the composition is skewed to basic residues. The required for homodimerization stretch occupies residues 159-226 (SRRSRISGGL…TSGKKKTPKK (68 aa)).

The protein belongs to the SMN family. Homodimer (via C-terminal region). Component of the core survival motor neuron (SMN) complex composed of Smn, Gem2, Gem3, rig/Gem5 and one of 3 almost identical Gem4 paralogs encoded by Glos/Gem4a, Gem4b or Gem4c. Interacts with Gem3 (via C-terminus); the interaction is direct and stabilizes Smn. Part of a minimal SMN complex composed of Smn and Gem2 only; this complex is active in UsnRNP assembly. The SMN complex associates with the entire set of spliceosomal snRNP Sm proteins, SmB, SmD1, SmD2, SmD3, SmE, SmF and SmG, and with the snRNP-specific proteins snRNP-U1-70K, U2A, snf/U1A and U5-116KD. Interacts with Glos/Gem4a; the interaction is probably indirect. Interacts with Sbat and Vlet; Sbat and Vlet, along with Hez, may form an accessory subcomplex involved in SMN complex function. Interacts weakly with Gem3. Interacts with SmB and SmD1; the interaction is favored by methylation of the Sm proteins. Interacts with Actn; the interaction occurs in thoracic tissues and in adult flies. Interacts with Rpp20. Interacts with msk and Snup; these interactions are RNA-dependent. In terms of tissue distribution, in late first instar larvae, expressed in pNBs. Expression increases as the pNBs enlarge, with the highest accumulation observed in dividing pNBs of second and third instar larvae. Enriched in type ID (thoracic and brain lobe), type IA and all the mira-expressing NBs of the brain lobes. In larvae, also expressed in muscle fibers. In larval and adult testis, expressed in germline stem cells and gonialblast, expression decreases as cells differentiate into cysts and spermatocytes. In adult fly thorax, expressed in the IFMs. In adult ovary, expressed in germline stem cells, cystoblasts, follicle cells, nurse cells and oocyte (at protein level). Also expressed in larval salivary glands.

It localises to the cytoplasm. The protein resides in the nucleus. The protein localises to the U-body. It is found in the gem. Its subcellular location is the cajal body. It localises to the myofibril. The protein resides in the sarcomere. The protein localises to the i band. It is found in the z line. Its function is as follows. Core component of the survival motor neuron (SMN) complex that plays an essential role in spliceosomal small nuclear ribonucleoprotein (snRNP) assembly in the cytoplasm, is required for pre-mRNA splicing in the nucleus and acts as a chaperone that discriminates target and non-target RNAs of Sm proteins. A major component of nuclear bodies known as gems (gemini of Cajal bodies) thought to be storage depots of excess SMN complexes. Required for normal expression of spliceosomal snRNAs and for U12 intron splicing. Required in cholinergic neurons, but not in motor neurons, to ensure correct splicing and proper levels of stas mRNA and normal neurotransmitter release by motor neurons. However, Smn is required in motor neurons, but not in cholinergic neurons, for normal motor behavior but plays no role in synaptic transmission according to a report. In both muscle and neurons, required for the formation of a normal neuromuscular junction (NMJ) structure. Plays a neuron-specific role in long-term homeostatic compensation at the larval NMJ. In the thorax of adult flies, required for Act88F, an indirect flight muscle (IFM)-specific actin, expression and for proper IFM myofibril formation. In nurse cells, oocytes and follicle cells, required to maintain normal organization of nuclear compartments including chromosomes, nucleoli, Cajal bodies, histone locus bodies and heterochromatin. Required for the functional integrity of the cytoplasmic U snRNP body (U body) and P body. Required in dividing postembryonic neuroblasts (pNBs) for the correct basal localization of mira. The tight regulation of its expression is critical for stem cell division, proliferation and differentiation in male germline and developing central nervous system (CNS). Required for tracheal terminal cell lumen formation. In Drosophila melanogaster (Fruit fly), this protein is Survival motor neuron protein.